Here is a 617-residue protein sequence, read N- to C-terminus: UvrABC system protein C (617 aa).

The GIY-YIG domain maps to 22–100; it reads KLPGVYRFFD…IKALSPKYNI (79 aa). One can recognise a UVR domain in the interval 209–244; it reads DELTRTLQHKMQTAAANLQFEEAARYRDQIQALGII.

It belongs to the UvrC family. As to quaternary structure, interacts with UvrB in an incision complex.

It localises to the cytoplasm. The UvrABC repair system catalyzes the recognition and processing of DNA lesions. UvrC both incises the 5' and 3' sides of the lesion. The N-terminal half is responsible for the 3' incision and the C-terminal half is responsible for the 5' incision. The sequence is that of UvrABC system protein C from Neisseria gonorrhoeae (strain ATCC 700825 / FA 1090).